Here is a 171-residue protein sequence, read N- to C-terminus: uncharacterized protein (171 aa).

Disordered stretches follow at residues 68 to 124 (NKNN…ASQQ) and 140 to 171 (GDED…SIKN). Positions 141–160 (DEDKGMDSTLKLPERTKRDS) are enriched in basic and acidic residues.

Belongs to the asfivirus H171R family.

The protein resides in the virion. This is an uncharacterized protein from Ornithodoros (relapsing fever ticks).